A 340-amino-acid polypeptide reads, in one-letter code: Melanin-concentrating hormone receptor 2 (340 aa).

The Extracellular segment spans residues methionine 1–serine 39. N-linked (GlcNAc...) asparagine glycosylation is found at asparagine 10 and asparagine 17. The helical transmembrane segment at methionine 40–isoleucine 60 threads the bilayer. Over arginine 61–aspartate 69 the chain is Cytoplasmic. A helical transmembrane segment spans residues isoleucine 70–isoleucine 90. Residues histidine 91–proline 104 lie on the Extracellular side of the membrane. The chain crosses the membrane as a helical span at residues leucine 105 to valine 129. Topologically, residues aspartate 130–asparagine 154 are cytoplasmic. Residues leucine 155–isoleucine 175 form a helical membrane-spanning segment. Residues lysine 176–tyrosine 200 lie on the Extracellular side of the membrane. A helical transmembrane segment spans residues leucine 201–leucine 221. Topologically, residues cysteine 222–methionine 252 are cytoplasmic. Residues valine 253–valine 273 form a helical membrane-spanning segment. Residues asparagine 274–tyrosine 288 lie on the Extracellular side of the membrane. A helical transmembrane segment spans residues tyrosine 289–leucine 309. Residues serine 310–phenylalanine 340 lie on the Cytoplasmic side of the membrane.

This sequence belongs to the G-protein coupled receptor 1 family. In terms of tissue distribution, specifically expressed in the brain, with highest levels in cerebral cortex, hippocampus and amygdala. No expression detected in the cerebellum, thalamus or hypothalamus.

It is found in the cell membrane. Functionally, receptor for melanin-concentrating hormone, coupled to G proteins that activate phosphoinositide hydrolysis. This chain is Melanin-concentrating hormone receptor 2 (MCHR2), found in Homo sapiens (Human).